The following is a 770-amino-acid chain: Protein argonaute (770 aa).

Residues 1 to 151 (MKAKVVINLV…VIHIIHQIQS (151 aa)) are N-terminal domain. The region spanning 154-272 (TLWELVNKDP…LLPQLVVPTY (119 aa)) is the PAZ domain. The segment at 276 to 361 (QLESDVAKEI…SQLLLWTNYS (86 aa)) is interdomain connector. Residues 362 to 544 (RKYPVILPYE…LSKLGVKYYV (183 aa)) are mid domain. The Piwi domain maps to 473–756 (GLAFIAARNK…FANAIRNEWK (284 aa)). Active-site residues include Asp558, Glu596, Asp628, and His745. Asp558 contributes to the Mn(2+) binding site. 3 residues coordinate Mn(2+): Asp628, His745, and Val770.

Belongs to the argonaute family. Long pAgo subfamily. In terms of assembly, monomer. It depends on Mn(2+) as a cofactor.

Its activity is regulated as follows. Inhibited at greater than 500 mM NaCl. In terms of biological role, a DNA-guided ssDNA endonuclease that may play a role in defense against invading mobile genetic elements. Uses short 5'-phospho-ssDNA sequences as guides (gDNA) to bind complementary target strands, resulting in cleavage of the target DNA (tDNA). Endonucleolytically cleaves DNA in short dsDNA (the gDNA indicates where to cleave on the tDNA). Efficient guide-dependent target DNA cleavage requires a minimal gDNA length of 15 nucleotides (nt) and works up to at least 31 nt. Overexpression decreases plasmid transformation efficiency. Has no appreciable activity with gRNA or on target RNA. Also has guide-independent activity on plasmid DNA called 'chopping'. The cleavage site is 10 nucleotides (nt) downstream of the target residue base-paired with the 5'-end of the gDNA, cleavage is insensitive to adenine methylation. DNA cleavage produces 5'-phosphomonoesters (as it can be ligated by T4 DNA ligase). The polypeptide is Protein argonaute (Pyrococcus furiosus (strain ATCC 43587 / DSM 3638 / JCM 8422 / Vc1)).